An 882-amino-acid polypeptide reads, in one-letter code: Alanine--tRNA ligase (882 aa).

Positions 570, 574, 672, and 676 each coordinate Zn(2+).

This sequence belongs to the class-II aminoacyl-tRNA synthetase family. Zn(2+) is required as a cofactor.

The protein resides in the cytoplasm. The enzyme catalyses tRNA(Ala) + L-alanine + ATP = L-alanyl-tRNA(Ala) + AMP + diphosphate. Functionally, catalyzes the attachment of alanine to tRNA(Ala) in a two-step reaction: alanine is first activated by ATP to form Ala-AMP and then transferred to the acceptor end of tRNA(Ala). Also edits incorrectly charged Ser-tRNA(Ala) and Gly-tRNA(Ala) via its editing domain. The polypeptide is Alanine--tRNA ligase (Xanthomonas campestris pv. campestris (strain B100)).